Reading from the N-terminus, the 311-residue chain is tRNA-cytidine(32) 2-sulfurtransferase (311 aa).

Residues 47 to 52 carry the PP-loop motif motif; sequence SGGKDS. The [4Fe-4S] cluster site is built by C122, C125, and C213.

The protein belongs to the TtcA family. As to quaternary structure, homodimer. Requires Mg(2+) as cofactor. [4Fe-4S] cluster is required as a cofactor.

The protein localises to the cytoplasm. It carries out the reaction cytidine(32) in tRNA + S-sulfanyl-L-cysteinyl-[cysteine desulfurase] + AH2 + ATP = 2-thiocytidine(32) in tRNA + L-cysteinyl-[cysteine desulfurase] + A + AMP + diphosphate + H(+). Its pathway is tRNA modification. Catalyzes the ATP-dependent 2-thiolation of cytidine in position 32 of tRNA, to form 2-thiocytidine (s(2)C32). The sulfur atoms are provided by the cysteine/cysteine desulfurase (IscS) system. The polypeptide is tRNA-cytidine(32) 2-sulfurtransferase (Shigella boydii serotype 4 (strain Sb227)).